A 489-amino-acid chain; its full sequence is Cytochrome P450-DIT2 (489 aa).

Cys435 provides a ligand contact to heme.

This sequence belongs to the cytochrome P450 family. Heme serves as cofactor.

Its function is as follows. Involved in spore wall maturation. Thought to catalyze the oxidation of tyrosine residues in the formation of LL-dityrosine a precursor of the spore wall. The polypeptide is Cytochrome P450-DIT2 (DIT2) (Saccharomyces cerevisiae (strain ATCC 204508 / S288c) (Baker's yeast)).